Consider the following 530-residue polypeptide: Chaperonin GroEL 2 (530 aa).

ATP is bound by residues 30–33, lysine 51, 87–91, glycine 415, 479–481, and aspartate 495; these read TLGP, DGTTT, and NAA.

Belongs to the chaperonin (HSP60) family. In terms of assembly, forms a cylinder of 14 subunits composed of two heptameric rings stacked back-to-back. Interacts with the co-chaperonin GroES.

The protein resides in the cytoplasm. It catalyses the reaction ATP + H2O + a folded polypeptide = ADP + phosphate + an unfolded polypeptide.. Its function is as follows. Together with its co-chaperonin GroES, plays an essential role in assisting protein folding. The GroEL-GroES system forms a nano-cage that allows encapsulation of the non-native substrate proteins and provides a physical environment optimized to promote and accelerate protein folding. This Vibrio cholerae serotype O1 (strain ATCC 39315 / El Tor Inaba N16961) protein is Chaperonin GroEL 2.